The following is a 556-amino-acid chain: Phenylalanine--tRNA ligase beta subunit (556 aa).

The B5 domain maps to 274–349 (HEPEEMEVDL…ITLGLNKIGY (76 aa)). Mg(2+)-binding residues include D327, D333, E336, and E337.

It belongs to the phenylalanyl-tRNA synthetase beta subunit family. Type 2 subfamily. In terms of assembly, tetramer of two alpha and two beta subunits. It depends on Mg(2+) as a cofactor.

It is found in the cytoplasm. The catalysed reaction is tRNA(Phe) + L-phenylalanine + ATP = L-phenylalanyl-tRNA(Phe) + AMP + diphosphate + H(+). The polypeptide is Phenylalanine--tRNA ligase beta subunit (Korarchaeum cryptofilum (strain OPF8)).